Here is a 240-residue protein sequence, read N- to C-terminus: Uridylate kinase (240 aa).

15–18 (KLSG) lines the ATP pocket. An involved in allosteric activation by GTP region spans residues 23–28 (GSEGFG). Residue glycine 57 coordinates UMP. Positions 58 and 62 each coordinate ATP. Residues aspartate 77 and 138–145 (TGNPFFTT) contribute to the UMP site. ATP-binding residues include threonine 165, tyrosine 171, and aspartate 174.

This sequence belongs to the UMP kinase family. Homohexamer.

The protein localises to the cytoplasm. It catalyses the reaction UMP + ATP = UDP + ADP. It functions in the pathway pyrimidine metabolism; CTP biosynthesis via de novo pathway; UDP from UMP (UMPK route): step 1/1. With respect to regulation, allosterically activated by GTP. Inhibited by UTP. Its function is as follows. Catalyzes the reversible phosphorylation of UMP to UDP. This is Uridylate kinase from Photobacterium profundum (strain SS9).